The primary structure comprises 158 residues: MGKVESFELDHTKVKAPYVRLITVEEGQKGDKISNFDLRLVQPNENAIPTGGLHTIEHLLAGLLRDRIDGYIDCSPFGCRTGFHLLVWGTPSTTDVAKALKESLEEIRDNITWEDVPGTTIESCGNYRDHSLFSAKQWSRDILEKGISDDPFERHVVE.

Positions 54, 58, and 124 each coordinate Fe cation.

Belongs to the LuxS family. As to quaternary structure, homodimer. It depends on Fe cation as a cofactor.

The catalysed reaction is S-(5-deoxy-D-ribos-5-yl)-L-homocysteine = (S)-4,5-dihydroxypentane-2,3-dione + L-homocysteine. Involved in the synthesis of autoinducer 2 (AI-2) which is secreted by bacteria and is used to communicate both the cell density and the metabolic potential of the environment. The regulation of gene expression in response to changes in cell density is called quorum sensing. Catalyzes the transformation of S-ribosylhomocysteine (RHC) to homocysteine (HC) and 4,5-dihydroxy-2,3-pentadione (DPD). In Lactobacillus johnsonii (strain CNCM I-12250 / La1 / NCC 533), this protein is S-ribosylhomocysteine lyase.